We begin with the raw amino-acid sequence, 132 residues long: ATP synthase epsilon chain, chloroplastic (132 aa).

Belongs to the ATPase epsilon chain family. As to quaternary structure, F-type ATPases have 2 components, CF(1) - the catalytic core - and CF(0) - the membrane proton channel. CF(1) has five subunits: alpha(3), beta(3), gamma(1), delta(1), epsilon(1). CF(0) has three main subunits: a, b and c.

The protein resides in the plastid. It is found in the chloroplast thylakoid membrane. Functionally, produces ATP from ADP in the presence of a proton gradient across the membrane. This Calycanthus floridus var. glaucus (Eastern sweetshrub) protein is ATP synthase epsilon chain, chloroplastic.